A 193-amino-acid polypeptide reads, in one-letter code: Mesogenin-1 (193 aa).

Positions 34-59 (GPFELNQASPSQSLSPAPSLESYSSS) are disordered. The segment covering 40 to 59 (QASPSQSLSPAPSLESYSSS) has biased composition (low complexity). Residues 124-178 (QRRRKASEREKLRMRTLADALHTLRNYLPPVYSQRGQPLTKIQTLKYTIKYIGEL) form the bHLH domain.

It is found in the nucleus. Involved in specifying the paraxial, but not dorsal, mesoderm. May regulate the expression of T-box transcription factors required for mesoderm formation and differentiation. The sequence is that of Mesogenin-1 (MSGN1) from Homo sapiens (Human).